Reading from the N-terminus, the 958-residue chain is SLIT and NTRK-like protein 5 (958 aa).

The signal sequence occupies residues 1–40; it reads MHTCCPPVTLEQDLHRKMHSWMLQTLAFAVTSLVLSCAET. The Extracellular portion of the chain corresponds to 41–664; sequence IDYYGEICDN…GGGASSVPLS (624 aa). LRR repeat units follow at residues 82–103, 106–127, 130–151, 154–175, 178–199, and 201–222; these read PIYH…EFVN, GASI…AFHG, GLRR…TFLG, NLEY…AFGK, LLQV…LFRF, and PLTH…GLLQ. An N-linked (GlcNAc...) asparagine glycan is attached at Asn-103. In terms of domain architecture, LRRCT 1 spans 235 to 286; that stretch reads NPWNCSCELISLKDWLDSISYSALVGDVVCETPFRLHGRDLDEVSKQELCPR. A disordered region spans residues 317-358; sequence ATSSSAVYKPPLKPPKGTRQPNKPRVRPTSRQPSKDLGYSNY. Positions 365–407 constitute an LRRNT domain; sequence QTKSPVPLECPTACSCNLQISDLGLNVNCQERKIESIAELQPK. 6 LRR repeats span residues 410–431, 434–455, 458–479, 482–503, 506–527, and 529–550; these read NPKK…DFLE, GLDL…AFGD, NLRR…LFYG, SLQY…TFDP, NLQL…VFSG, and TLLR…GVLD. The 52-residue stretch at 563-614 folds into the LRRCT 2 domain; it reads NPWDCTCDIVGMKLWVEQLKVGVLVDEVICKAPKKFAETDMRSIKSELLCPD. The N-linked (GlcNAc...) asparagine glycan is linked to Asn-644. A helical transmembrane segment spans residues 665 to 685; it reads VLILSLLLVFIMSVFVAAGLF. Residues 686–958 lie on the Cytoplasmic side of the membrane; sequence VLVMKRRKKN…LEKQTTFSQF (273 aa). Residues 789-844 form a disordered region; that stretch reads NHHLQQQQQPPPPPQQPQQQPPPQLQLQPGEEERRESHHLRSPAYSVSTIEPREDL. The span at 797–812 shows a compositional bias: pro residues; sequence QPPPPPQQPQQQPPPQ.

Belongs to the SLITRK family. Expressed predominantly in the cerebral cortex of the brain but also at low levels in the spinal cord and medulla.

It is found in the membrane. In terms of biological role, suppresses neurite outgrowth. This is SLIT and NTRK-like protein 5 (SLITRK5) from Homo sapiens (Human).